A 271-amino-acid chain; its full sequence is Putative phosphoenolpyruvate synthase regulatory protein (271 aa).

ADP is bound at residue 151–158; that stretch reads GVSRSGKT.

The protein belongs to the pyruvate, phosphate/water dikinase regulatory protein family. PSRP subfamily.

The enzyme catalyses [pyruvate, water dikinase] + ADP = [pyruvate, water dikinase]-phosphate + AMP + H(+). It carries out the reaction [pyruvate, water dikinase]-phosphate + phosphate + H(+) = [pyruvate, water dikinase] + diphosphate. Its function is as follows. Bifunctional serine/threonine kinase and phosphorylase involved in the regulation of the phosphoenolpyruvate synthase (PEPS) by catalyzing its phosphorylation/dephosphorylation. The chain is Putative phosphoenolpyruvate synthase regulatory protein from Paraburkholderia phytofirmans (strain DSM 17436 / LMG 22146 / PsJN) (Burkholderia phytofirmans).